We begin with the raw amino-acid sequence, 424 residues long: D-inositol 3-phosphate glycosyltransferase (424 aa).

Residue His-16 coordinates 1D-myo-inositol 3-phosphate. UDP-N-acetyl-alpha-D-glucosamine-binding positions include 22–23 (QP) and Gly-30. Residues 27–32 (DAGGMN), Lys-85, Tyr-118, Thr-142, and Arg-162 each bind 1D-myo-inositol 3-phosphate. Positions 240 and 245 each coordinate UDP-N-acetyl-alpha-D-glucosamine. Mg(2+) contacts are provided by Met-313, Arg-314, and Ala-316. Positions 326 and 334 each coordinate UDP-N-acetyl-alpha-D-glucosamine. Mg(2+) is bound at residue Thr-340.

Belongs to the glycosyltransferase group 1 family. MshA subfamily. As to quaternary structure, homodimer.

The catalysed reaction is 1D-myo-inositol 3-phosphate + UDP-N-acetyl-alpha-D-glucosamine = 1D-myo-inositol 2-acetamido-2-deoxy-alpha-D-glucopyranoside 3-phosphate + UDP + H(+). Its function is as follows. Catalyzes the transfer of a N-acetyl-glucosamine moiety to 1D-myo-inositol 3-phosphate to produce 1D-myo-inositol 2-acetamido-2-deoxy-glucopyranoside 3-phosphate in the mycothiol biosynthesis pathway. The chain is D-inositol 3-phosphate glycosyltransferase from Jonesia denitrificans (strain ATCC 14870 / DSM 20603 / BCRC 15368 / CIP 55.134 / JCM 11481 / NBRC 15587 / NCTC 10816 / Prevot 55134) (Listeria denitrificans).